Reading from the N-terminus, the 252-residue chain is 3-dehydroquinate dehydratase (252 aa).

3-dehydroquinate is bound by residues Ser21, 46–48, and Arg82; that span reads EWR. His143 (proton donor/acceptor) is an active-site residue. Lys170 serves as the catalytic Schiff-base intermediate with substrate. Arg213, Ser232, and Gln236 together coordinate 3-dehydroquinate.

Belongs to the type-I 3-dehydroquinase family. As to quaternary structure, homodimer.

It carries out the reaction 3-dehydroquinate = 3-dehydroshikimate + H2O. It functions in the pathway metabolic intermediate biosynthesis; chorismate biosynthesis; chorismate from D-erythrose 4-phosphate and phosphoenolpyruvate: step 3/7. Its function is as follows. Involved in the third step of the chorismate pathway, which leads to the biosynthesis of aromatic amino acids. Catalyzes the cis-dehydration of 3-dehydroquinate (DHQ) and introduces the first double bond of the aromatic ring to yield 3-dehydroshikimate. The protein is 3-dehydroquinate dehydratase of Escherichia coli O17:K52:H18 (strain UMN026 / ExPEC).